Here is a 269-residue protein sequence, read N- to C-terminus: GTP cyclohydrolase FolE2 (269 aa).

Belongs to the GTP cyclohydrolase IV family.

The enzyme catalyses GTP + H2O = 7,8-dihydroneopterin 3'-triphosphate + formate + H(+). Its pathway is cofactor biosynthesis; 7,8-dihydroneopterin triphosphate biosynthesis; 7,8-dihydroneopterin triphosphate from GTP: step 1/1. Functionally, converts GTP to 7,8-dihydroneopterin triphosphate. The polypeptide is GTP cyclohydrolase FolE2 (Burkholderia multivorans (strain ATCC 17616 / 249)).